The primary structure comprises 511 residues: L-aspartate oxidase (511 aa).

FAD is bound by residues 16–19 (AGLA) and 48–55 (SSAWAQGG). Catalysis depends on arginine 282, which acts as the Proton donor/acceptor. Residues glutamate 365 and 381–382 (SL) each bind FAD.

It belongs to the FAD-dependent oxidoreductase 2 family. NadB subfamily. The cofactor is FAD.

The protein localises to the cytoplasm. It carries out the reaction L-aspartate + O2 = iminosuccinate + H2O2. Its pathway is cofactor biosynthesis; NAD(+) biosynthesis; iminoaspartate from L-aspartate (oxidase route): step 1/1. In terms of biological role, catalyzes the oxidation of L-aspartate to iminoaspartate, the first step in the de novo biosynthesis of NAD(+). This chain is L-aspartate oxidase (nadB), found in Caulobacter vibrioides (strain ATCC 19089 / CIP 103742 / CB 15) (Caulobacter crescentus).